The chain runs to 452 residues: Glycine receptor subunit alpha-2 (452 aa).

An N-terminal signal peptide occupies residues 1 to 27; it reads MNRQLVNILTALFAFFLGTNHFREAFC. Topologically, residues 28-256 are extracellular; sequence KDHDSRSGKH…KFHLERQMGY (229 aa). The N-linked (GlcNAc...) asparagine glycan is linked to Asn-72. Arg-99 provides a ligand contact to glycine. Arg-99 is a strychnine binding site. N-linked (GlcNAc...) asparagine glycosylation occurs at Asn-103. Residue Ser-163 coordinates glycine. Cys-172 and Cys-186 are disulfide-bonded. 2 residues coordinate Zn(2+): Glu-226 and Glu-228. Cys-232 and Cys-243 form a disulfide bridge. Glycine is bound at residue Thr-238. His-249 is a Zn(2+) binding site. The chain crosses the membrane as a helical span at residues 257–278; it reads YLIQMYIPSLLIVILSWVSFWI. Over 279-283 the chain is Cytoplasmic; it reads NMDAA. A helical transmembrane segment spans residues 284-304; it reads PARVALGITTVLTMTTQSSGS. The Extracellular segment spans residues 305–315; it reads RASLPKVSYVK. The chain crosses the membrane as a helical span at residues 316–336; that stretch reads AIDIWMAVCLLFVFAALLEYA. Residues 337 to 420 are Cytoplasmic-facing; the sequence is AVNFVSRQHK…FVDRAKRIDT (84 aa). Residues 421-441 traverse the membrane as a helical segment; sequence ISRAAFPLAFLIFNIFYWITY. The Extracellular portion of the chain corresponds to 442–452; it reads KIIRHEDVHKK.

The protein belongs to the ligand-gated ion channel (TC 1.A.9) family. Glycine receptor (TC 1.A.9.3) subfamily. GLRA2 sub-subfamily. Interacts with GLRB. Heteropentamer composed of GLRA2 and GLRB; functional GLRB-GLRA2 heteropentamers contain four GLRA2 subunits and one GLRB subunit, although alternative subunit composition cannot be excluded. Homopentamer (in vitro). Both homopentamers and heteropentamers form functional ion channels, but their characteristics are subtly different.

The protein localises to the postsynaptic cell membrane. Its subcellular location is the synapse. It is found in the cell membrane. It localises to the cell projection. The catalysed reaction is chloride(in) = chloride(out). With respect to regulation, channel opening is triggered by extracellular glycine. Channel opening is also triggered by taurine and beta-alanine. Inhibited by strychnine. Inhibited by picrotoxin. Its function is as follows. Subunit of heteromeric glycine-gated chloride channels. Plays a role in synaptic plasticity. Contributes to the generation of inhibitory postsynaptic currents, and is involved in the down-regulation of neuronal excitability. Plays a role in cellular responses to ethanol. This chain is Glycine receptor subunit alpha-2, found in Rattus norvegicus (Rat).